The primary structure comprises 380 residues: Cytochrome b (380 aa).

4 helical membrane-spanning segments follow: residues 33 to 53, 77 to 98, 113 to 133, and 178 to 198; these read FGSL…FLAM, WLIR…FLHV, WNMG…GYVL, and FFAF…VHLL. The heme b site is built by His83 and His97. Positions 182 and 196 each coordinate heme b. His201 contributes to the a ubiquinone binding site. Transmembrane regions (helical) follow at residues 226–246, 288–308, 320–340, and 347–367; these read IKDL…VLFF, LGGV…PLLH, ITQT…WIGG, and FIMI…IFMP.

It belongs to the cytochrome b family. The cytochrome bc1 complex contains 11 subunits: 3 respiratory subunits (MT-CYB, CYC1 and UQCRFS1), 2 core proteins (UQCRC1 and UQCRC2) and 6 low-molecular weight proteins (UQCRH/QCR6, UQCRB/QCR7, UQCRQ/QCR8, UQCR10/QCR9, UQCR11/QCR10 and a cleavage product of UQCRFS1). This cytochrome bc1 complex then forms a dimer. The cofactor is heme b.

The protein localises to the mitochondrion inner membrane. In terms of biological role, component of the ubiquinol-cytochrome c reductase complex (complex III or cytochrome b-c1 complex) that is part of the mitochondrial respiratory chain. The b-c1 complex mediates electron transfer from ubiquinol to cytochrome c. Contributes to the generation of a proton gradient across the mitochondrial membrane that is then used for ATP synthesis. The protein is Cytochrome b (MT-CYB) of Synaptomys borealis (Northern bog lemming).